A 195-amino-acid chain; its full sequence is Thioredoxin reductase-like selenoprotein T (195 aa).

The N-terminal stretch at 1 to 19 is a signal peptide; the sequence is MRLLLLLLVAASAVVRSEA. Positions 46-49 form a cross-link, cysteinyl-selenocysteine (Cys-Sec); that stretch reads CVSU. Position 49 (selenocysteine 49) is a non-standard amino acid, selenocysteine. The chain crosses the membrane as a helical span at residues 85–103; that stretch reads IASFLSVFKLVLIGLIIVG.

Belongs to the SelWTH family. Selenoprotein T subfamily. May contain a selenide-sulfide bond between Cys-46 and Sec-49. This bond is speculated to serve as redox-active pair. Ubiquitous. Highly expressed in the endocrine pancreas. Expressed at low levels in the adult brain.

It localises to the endoplasmic reticulum membrane. It carries out the reaction [thioredoxin]-dithiol + NADP(+) = [thioredoxin]-disulfide + NADPH + H(+). Selenoprotein with thioredoxin reductase-like oxidoreductase activity. Protects dopaminergic neurons against oxidative stress and cell death. Involved in ADCYAP1/PACAP-induced calcium mobilization and neuroendocrine secretion. Plays a role in fibroblast anchorage and redox regulation. In gastric smooth muscle, modulates the contraction processes through the regulation of calcium release and MYLK activation. In pancreatic islets, involved in the control of glucose homeostasis, contributes to prolonged ADCYAP1/PACAP-induced insulin secretion. This Mus musculus (Mouse) protein is Thioredoxin reductase-like selenoprotein T.